A 327-amino-acid chain; its full sequence is Glycerol-3-phosphate dehydrogenase [NAD(P)+] (327 aa).

NADPH-binding residues include W15, R35, and K109. 3 residues coordinate sn-glycerol 3-phosphate: K109, G137, and S139. Position 141 (A141) interacts with NADPH. Sn-glycerol 3-phosphate-binding residues include K192, D245, S255, R256, and N257. K192 acts as the Proton acceptor in catalysis. R256 contributes to the NADPH binding site. L275 and E277 together coordinate NADPH.

It belongs to the NAD-dependent glycerol-3-phosphate dehydrogenase family.

Its subcellular location is the cytoplasm. It catalyses the reaction sn-glycerol 3-phosphate + NAD(+) = dihydroxyacetone phosphate + NADH + H(+). The catalysed reaction is sn-glycerol 3-phosphate + NADP(+) = dihydroxyacetone phosphate + NADPH + H(+). Its pathway is membrane lipid metabolism; glycerophospholipid metabolism. In terms of biological role, catalyzes the reduction of the glycolytic intermediate dihydroxyacetone phosphate (DHAP) to sn-glycerol 3-phosphate (G3P), the key precursor for phospholipid synthesis. The sequence is that of Glycerol-3-phosphate dehydrogenase [NAD(P)+] from Chelativorans sp. (strain BNC1).